A 447-amino-acid chain; its full sequence is MGKYFGTDGVRGVANTELTPELAFKLGRIGGYVLTKDKENPKVLIGRDTRISGEMLEGALVAGLLSIGVEVMRLGVISTPGVAFLTKAVSASAGVMISASHNPVADNGIKFFGPDGFKLLDEQEKEIETLLDQEDALPRPTGADLGQANDYFEGAQKYLQFLKQTVDEDFTGIHIALDCANGAASSLAPHLFADLEADISTMGTSPNGKNINDGVGSTHPEALAAFVNAKNADIGLAFDGDADRLIAVDEKGNIVDGDKILYICAKYMKEKGLLKQQTLVTTVMSNLGLYKALEALQIDTKQTAVGDRYVMEEMRKGGYNLGGEQSGHIIFLDHITTGDGMLSALQLVNIMKQTGKKLSELAEEWETFPQTLVNIRVTDKHAVTDNEKVPAVIKEVEQEMNGEGRVLVRPSGTEPLVRIMVEAKTEELCDAFVNKIADVVKAELGQE.

Ser-100 acts as the Phosphoserine intermediate in catalysis. Residues Ser-100, Asp-239, Asp-241, and Asp-243 each contribute to the Mg(2+) site. Residue Ser-100 is modified to Phosphoserine.

This sequence belongs to the phosphohexose mutase family. The cofactor is Mg(2+). Activated by phosphorylation.

The catalysed reaction is alpha-D-glucosamine 1-phosphate = D-glucosamine 6-phosphate. In terms of biological role, catalyzes the conversion of glucosamine-6-phosphate to glucosamine-1-phosphate. The sequence is that of Phosphoglucosamine mutase from Halalkalibacterium halodurans (strain ATCC BAA-125 / DSM 18197 / FERM 7344 / JCM 9153 / C-125) (Bacillus halodurans).